A 79-amino-acid polypeptide reads, in one-letter code: D-alanyl carrier protein (79 aa).

Residues 1-77 enclose the Carrier domain; the sequence is MDVKAEVIEI…KIVEGVTELR (77 aa). O-(pantetheine 4'-phosphoryl)serine is present on serine 35.

Belongs to the DltC family. Post-translationally, 4'-phosphopantetheine is transferred from CoA to a specific serine of apo-DCP.

It localises to the cytoplasm. It participates in cell wall biogenesis; lipoteichoic acid biosynthesis. In terms of biological role, carrier protein involved in the D-alanylation of lipoteichoic acid (LTA). The loading of thioester-linked D-alanine onto DltC is catalyzed by D-alanine--D-alanyl carrier protein ligase DltA. The DltC-carried D-alanyl group is further transferred to cell membrane phosphatidylglycerol (PG) by forming an ester bond, probably catalyzed by DltD. D-alanylation of LTA plays an important role in modulating the properties of the cell wall in Gram-positive bacteria, influencing the net charge of the cell wall. The polypeptide is D-alanyl carrier protein (Streptococcus gordonii (strain Challis / ATCC 35105 / BCRC 15272 / CH1 / DL1 / V288)).